We begin with the raw amino-acid sequence, 507 residues long: Maturase K (507 aa).

It belongs to the intron maturase 2 family. MatK subfamily.

The protein localises to the plastid. It is found in the chloroplast. Usually encoded in the trnK tRNA gene intron. Probably assists in splicing its own and other chloroplast group II introns. The polypeptide is Maturase K (Euryale ferox (Gorgon plant)).